Reading from the N-terminus, the 146-residue chain is Kappa-casein (146 aa).

O-linked (GalNAc...) threonine glycosylation is found at Thr-107, Thr-112, and Thr-118. Ser-143 is subject to Phosphoserine.

The protein belongs to the kappa-casein family. Mammary gland specific. Secreted in milk.

It localises to the secreted. Kappa-casein stabilizes micelle formation, preventing casein precipitation in milk. The sequence is that of Kappa-casein (CSN3) from Dicotyles tajacu (Collared peccary).